We begin with the raw amino-acid sequence, 235 residues long: Octanoyltransferase LIP2, mitochondrial (235 aa).

The N-terminal 32 residues, 1–32, are a transit peptide targeting the mitochondrion; sequence MRSPRTLEVWKLGTVNYLKSLKLQEKLVSERK. One can recognise a BPL/LPL catalytic domain in the interval 34-218; that stretch reads HQIPDTLLSL…CLAKAFSYDD (185 aa). Substrate is bound by residues 79–86, 147–149, and 160–162; these read RGGDITFH, AIG, and GLA. Cys-178 serves as the catalytic Acyl-thioester intermediate.

The protein belongs to the LipB family. Expressed in leaves. Expressed in roots, rosette leaves, cauline leaves, stems and siliques.

It is found in the mitochondrion. The enzyme catalyses octanoyl-[ACP] + L-lysyl-[protein] = N(6)-octanoyl-L-lysyl-[protein] + holo-[ACP] + H(+). It functions in the pathway protein modification; protein lipoylation via endogenous pathway; protein N(6)-(lipoyl)lysine from octanoyl-[acyl-carrier-protein]: step 1/2. Its function is as follows. Catalyzes the transfer of endogenously produced octanoic acid from octanoyl-acyl-carrier-protein onto the lipoyl domains of lipoate-dependent enzymes. Lipoyl-ACP can also act as a substrate although octanoyl-ACP is likely to be the physiological substrate. Together with LIP1 is essential for mitochondrial protein lipoylation during seed development. Required for the lipoylation of mitochondrial 2-oxoglutarate dehydrogenase component E2 proteins in leaves and roots. This is Octanoyltransferase LIP2, mitochondrial from Arabidopsis thaliana (Mouse-ear cress).